A 498-amino-acid chain; its full sequence is Angiopoietin-1 (498 aa).

Residues 1–19 form the signal peptide; the sequence is MTVFLSFAFLAAILTHIGC. N-linked (GlcNAc...) asparagine glycans are attached at residues asparagine 92, asparagine 122, asparagine 154, asparagine 243, and asparagine 295. The stretch at 158 to 254 forms a coiled coil; the sequence is RLEIQLLENS…SVLQKQQLEL (97 aa). A Fibrinogen C-terminal domain is found at 277–497; it reads KEEVKPFRDC…STTMMIRPLD (221 aa). Intrachain disulfides connect cysteine 286-cysteine 315 and cysteine 439-cysteine 452.

Homooligomer. Interacts with TEK/TIE2. Interacts with SVEP1/polydom. Interacts with THBD; this interaction significantly inhibits the generation of activated PC and TAFIa/CPB2 by the thrombin/thrombomodulin complex.

It is found in the secreted. In terms of biological role, binds and activates TIE2 receptor by inducing its tyrosine phosphorylation. Implicated in endothelial developmental processes later and distinct from that of VEGF. Appears to play a crucial role in mediating reciprocal interactions between the endothelium and surrounding matrix and mesenchyme. Mediates blood vessel maturation/stability. It may play an important role in the heart early development. In Sus scrofa (Pig), this protein is Angiopoietin-1 (ANGPT1).